The primary structure comprises 2180 residues: MSNRFKGSSTGHYVRAGAGGQPNTYGLTAHQLLQSKKVDDIDAMMGFERHISPQDGAGAGNSERIGWLCNMHPTVVADELNAGASGVGVAGVDFYFLDEEGGSFKSTILYDPYFLLSCQDSNRVHDVEEFLKKYLEGCLKTVEVVQKDDLAMDNHLVGLKRTLLKLNFVNTNNLFEARKLLRPILKDNEENQQQRDIYSLNDTTNRRDAKMLIDDIREYDVPYHVRVCIDKEIRVGKWYRVTSGGLVEYTDKVAFADPVVLAFDIETTKAPLKFPDSAIDQIMMISYMIDGEGYLITNREIISEDIEDFEYTPKPEYQGLFTVFNEEDERSLLERFFEHIRDVRPTVISTFNGDFFDWPFVEARSKIRGLSMFDEIGFAPDSEGEYKSSYCAHMDCYRWVKRDSYLPQGSQGLKAVTQVKLGYNPIELDPELMTPYAYEKPQHLSEYSVSDAVATYYLYMKYVHPFIFSLCTVLPLNPDEVLRKGTGTLCEMLLMVQAYDHGILLPNKHTEPIERFYDGHLLESETYVGGHVESLEAGVFRSDIDCDFTIDSTAIDELLQDLPHALKFCIEVENKTKVEDVLDFEDILNTITEQLQELKMNNKRKELPLIYHVDVASMYPNIMTTNRLQPDSMKTERDCASCDFNRPGKKCDRRLKWTWRGEFLPAKMDEYAMVKRALMNEVFPNKYKNTTKKLLTFDELSYSEQVSHIKKRLSEYSRKVYHRVKVTESVVRESIVCQRENPFYVNTVRSFRDRRYEFKGHAKTWKKKLSQIDPEDKVARDEARKMIVLYDSLQLAHKVILNSFYGYAMRKGSRWYSIEMAGITCSTGATIIQMARALVERIGRPLELDTDGIWCIIPRSFPENFEFTLKNGKKLYLSYPCSMLNYKVHQSFTNHQYQELVNDAKHKYKISSDNSIFFEVDGPYKAMILPTSKEEGKGIKKRYAVFNEDGSLAELKGFELKRRGELQLIKNFQQDIFKVFLEGRTLEECYGAVAKVANRWLDILDSKGSMLETEDLIDLICENKSMSKKLKEYDGQKSTSITTARRLGEFLGQEMVKDAGLQCKFIISSKPANAPVTERAIPVAIFSADHNIKKLFLRKWLLDSSLDNFDLRAILDWNYYRERLASVIQKIITIPAALQNVNNPVPRVDHPEWLRKKIATSESKFKQTSIGRFFKKSNGMPEIADIEDNAFSTESSSGAKVARVVTKKKRKRENETKDNQPVLPSVMPAIDEDYVGWLNYQKIKWQLQAEERHRRKQLFGSSSTLNDRSALGNIIKKHAESYANSDWEILQYKNSSEPGVVEVHALISGKVQSLKFHIHKTVFLKFKTDTLPPGGIPNCVIEKSNAILPNTKEDSYNTSSSLFRVTCPETVFLDEQNKVSSVFNSGNILGIYESTIPASERAIMELGNAVKFKSNVMGALSKGLQHGFQAKNLLSVTSERYLQRFDLEVIYLLNLTTNLGYEFFVLFNGWGDQAKVFVLKPSIAAQELSRHALEAAYEQQYLKKVKNFEKFRHYFMPAESAKFELHHFTDKSVLLRSLSKVVSSWSELKGSQLLLLLQSPTPSRLLKSIRILNQLPVVQLSTCELAFPTLNWQDQLIKKTVSHILQLGSWLSNLTILSNYTRIPICNLNLTNLGYVIDIMYARRLKLENIVLWWNQKQPLPDRGGIQNEYNPHTLSLATDLTSPVINNPEFYDSAVLEIEVNNLLVNTILTSTLINEAEGGDVAGPESGGREGGGFVEDAFSTASVNILRSLLKDLWDDALQNNSTADSLVHSFIGWVQSVDSKLFDYTLRYYVNMLTKKALFQLINEFRFMGSQVVFLDRNKILLKTSKNTIDNSYAYGQYLIKAIRTRPLFSYLDLKIVRYWDILLWMDQYNHGGCACLKIEEKERQDIQAYSSWHIKNFLAPIYQQEFDDWLVIILDSMIKCKQQFYELSGTQRLTQLPNRSQAADEDDENSVFAGFTKRFYQPFINRISKLYKTQQEYILDPNFRADYIIPDLPGRNPKMKAGNPLLELVKSLCHVLLLCKERTLEVRALRKEALEVFEIREFDSSASFENPASSLIINNFMCENCAYFSDLDICMSDLRSMFKCSKCYRTLRKPFIEENLIQKLQIQTIAYISQDLRCAKCRKIKSDTMSAYCTCSGKWVQTISKDTYLKNVQLFYHVAEYFGFSLLLSAIKGGI.

Zn(2+)-binding residues include Cys2067, Cys2070, Cys2089, and Cys2092. Residues 2067 to 2092 form a CysA-type zinc finger; it reads CENCAYFSDLDICMSDLRSMFKCSKC. The [4Fe-4S] cluster site is built by Cys2123, Cys2126, Cys2138, and Cys2140. The CysB motif signature appears at 2123–2140; sequence CAKCRKIKSDTMSAYCTC.

The protein belongs to the DNA polymerase type-B family. Heterotetramer. Consists of 4 subunits: POL2, DPB2, DPB3 and DPB4. [4Fe-4S] cluster serves as cofactor.

The protein localises to the nucleus. The enzyme catalyses DNA(n) + a 2'-deoxyribonucleoside 5'-triphosphate = DNA(n+1) + diphosphate. Its function is as follows. DNA polymerase II participates in chromosomal DNA replication. The polypeptide is DNA polymerase epsilon catalytic subunit A (POL2) (Eremothecium gossypii (strain ATCC 10895 / CBS 109.51 / FGSC 9923 / NRRL Y-1056) (Yeast)).